The sequence spans 279 residues: RxLR effector protein Avh331 (279 aa).

Residues Met1–Ala20 form the signal peptide. Residues Arg86–Arg106 carry the RxLR-dEER motif. N-linked (GlcNAc...) asparagine glycosylation occurs at Asn100. The segment at Ala129 to Leu147 is W1 motif. The tract at residues Gly153 to Asp174 is Y1 motif. The interval Ser178–Ala208 is l motif. Residues Gln222–Val240 form a W2 motif region. Residues Pro250–Lys271 form a Y2 motif region.

It belongs to the RxLR effector family.

The protein localises to the secreted. It is found in the host cell. Its function is as follows. Effector that suppresses the host mitogen-activated protein kinase (MAPK)-based plant defense activated by the Phytophthora elicitor to promote colonization of the Phytophthora pathogen. Neither directly inhibits MAPK kinase activity nor interacts with MAPK proteins but acts downstream by suppressing transcriptional activation of resistance marker genes such as FRK1, WRKY22 and WRKY29. Confers avirulence in the presence of resistance protein Rps1k in host. In Phytophthora sojae (strain P6497) (Soybean stem and root rot agent), this protein is RxLR effector protein Avh331.